Consider the following 338-residue polypeptide: Heat-inducible transcription repressor HrcA (338 aa).

The protein belongs to the HrcA family.

Functionally, negative regulator of class I heat shock genes (grpE-dnaK-dnaJ and groELS operons). Prevents heat-shock induction of these operons. This is Heat-inducible transcription repressor HrcA from Thermotoga maritima (strain ATCC 43589 / DSM 3109 / JCM 10099 / NBRC 100826 / MSB8).